A 176-amino-acid polypeptide reads, in one-letter code: Retinol-binding protein 4-A (176 aa).

Serine 1 carries the post-translational modification N-acetylserine. 3 cysteine pairs are disulfide-bonded: cysteine 3/cysteine 159, cysteine 69/cysteine 173, and cysteine 119/cysteine 128. A substrate-binding site is contributed by glutamine 97.

Belongs to the calycin superfamily. Lipocalin family.

The protein localises to the secreted. Its function is as follows. RBP delivers retinol from the liver stores to the peripheral tissues. In plasma, the RBP-retinol complex interacts with transthyretin, this prevents its loss by filtration through the kidney glomeruli. The polypeptide is Retinol-binding protein 4-A (rbp4a) (Oncorhynchus mykiss (Rainbow trout)).